Here is a 475-residue protein sequence, read N- to C-terminus: Threonine synthase (475 aa).

K120 carries the N6-(pyridoxal phosphate)lysine modification.

This sequence belongs to the threonine synthase family. Pyridoxal 5'-phosphate is required as a cofactor.

It carries out the reaction O-phospho-L-homoserine + H2O = L-threonine + phosphate. It functions in the pathway amino-acid biosynthesis; L-threonine biosynthesis; L-threonine from L-aspartate: step 5/5. In terms of biological role, catalyzes the gamma-elimination of phosphate from L-phosphohomoserine and the beta-addition of water to produce L-threonine. The chain is Threonine synthase (thrC) from Methylobacillus glycogenes.